The following is a 611-amino-acid chain: Actin-interacting protein 1 (611 aa).

9 WD repeats span residues 57–96, 145–185, 188–227, 237–276, 322–361, 446–485, 489–528, 534–573, and 579–610; these read EHSH…HILK, GQAR…FKST, EHTK…KTGV, AHSG…VEKT, GHNK…SNRV, PISY…VSEV, VHPA…ELAH, FHTA…DHPI, and HAMS…WNVP.

Belongs to the WD repeat AIP1 family.

It is found in the cytoplasm. Its subcellular location is the cytoskeleton. Its function is as follows. Induces disassembly of actin filaments in conjunction with ADF/cofilin family proteins. Regulator of actin organization in myofibrils. The sequence is that of Actin-interacting protein 1 (unc-78) from Caenorhabditis elegans.